The primary structure comprises 666 residues: MATTVTCTRFTDEYQLYEDIGKGAFSVVRRCVKLCTGHEYAAKIINTKKLSARDHQKLEREARICRLLKHSNIVRLHDSISEEGFHYLVFDLVTGGELFEDIVAREYYSEADASHCIQQILEAVLHCHQMGVVHRDLKPENLLLASKCKGAAVKLADFGLAIEVQGDQQAWFGFAGTPGYLSPEVLRKEAYGKPVDIWACGVILYILLVGYPPFWDEDQHKLYQQIKAGAYDFPSPEWDTVTPEAKNLINQMLTINPAKRITAHEALKHPWVCQRSTVASMMHRQETVECLKKFNARRKLKGAILTTMLATRNFSVGRQTTAPATMSTAASGTTMGLVEQAKSLLNKKADGVKPQTNSTKNSAAATSPKGTLPPAALEPQTTVIHNPVDGIKESSDSANTTIEDEDAKAPRVPDILSSVRRGSGAPEAEGPLPCPSPAPFSPLPAPSPRISDILNSVRRGSGTPEAEGPLSAGPPPCLSPALLGPLSSPSPRISDILNSVRRGSGTPEAEGPSPVGPPPCPSPTIPGPLPTPSRKQEIIKTTEQLIEAVNNGDFEAYAKICDPGLTSFEPEALGNLVEGMDFHRFYFENLLAKNSKPIHTTILNPHVHVIGEDAACIAYIRLTQYIDGQGRPRTSQSEETRVWHRRDGKWQNVHFHCSGAPVAPLQ.

Positions Y14 to V272 constitute a Protein kinase domain. Y17 is modified (phosphotyrosine). ATP-binding positions include I20–V28 and K43. The active-site Proton acceptor is D136. The autoinhibitory domain stretch occupies residues H283–K292. T287 is subject to Phosphothreonine; by autocatalysis. Residues L291 to K301 are calmodulin-binding. 2 positions are modified to phosphothreonine; by autocatalysis: T306 and T307. The interval A349–R534 is disordered. Over residues P354 to K369 the composition is skewed to polar residues. Phosphoserine occurs at positions 367, 394, and 397. Phosphothreonine is present on residues T400 and T401. A compositionally biased stretch (pro residues) spans L432–S447. Residues S479–P491 show a composition bias toward low complexity. Over residues P514–T531 the composition is skewed to pro residues.

This sequence belongs to the protein kinase superfamily. CAMK Ser/Thr protein kinase family. CaMK subfamily. As to quaternary structure, CAMK2 is composed of 4 different chains: alpha (CAMK2A), beta (CAMK2B), gamma (CAMK2G), and delta (CAMK2D). The different isoforms assemble into homo- or heteromultimeric holoenzymes composed of 12 subunits with two hexameric rings stacked one on top of the other. Interacts with SYNGAP1 and CAMK2N2. Interacts with MPDZ. Interacts with FOXO3. Interacts (when in a kinase inactive state not associated with calmodulin) with ARC; leading to target ARC to inactive synapses. Interacts with CAMK2N1; this interaction requires CAMK2B activation by Ca(2+). Post-translationally, autophosphorylation of Thr-287 following activation by Ca(2+)/calmodulin. Phosphorylation of Thr-287 locks the kinase into an activated state. Widely expressed. Expressed in adult and fetal brain. Expression is slightly lower in fetal brain. Expressed in skeletal muscle.

The protein localises to the cytoplasm. The protein resides in the cytoskeleton. It localises to the microtubule organizing center. It is found in the centrosome. Its subcellular location is the sarcoplasmic reticulum membrane. The protein localises to the synapse. It catalyses the reaction L-seryl-[protein] + ATP = O-phospho-L-seryl-[protein] + ADP + H(+). The catalysed reaction is L-threonyl-[protein] + ATP = O-phospho-L-threonyl-[protein] + ADP + H(+). With respect to regulation, activated by Ca(2+)/calmodulin. Binding of calmodulin results in conformational change that relieves intrasteric autoinhibition and allows autophosphorylation of Thr-287 which turns the kinase in a constitutively active form and confers to the kinase a Ca(2+)-independent activity. In terms of biological role, calcium/calmodulin-dependent protein kinase that functions autonomously after Ca(2+)/calmodulin-binding and autophosphorylation, and is involved in dendritic spine and synapse formation, neuronal plasticity and regulation of sarcoplasmic reticulum Ca(2+) transport in skeletal muscle. In neurons, plays an essential structural role in the reorganization of the actin cytoskeleton during plasticity by binding and bundling actin filaments in a kinase-independent manner. This structural function is required for correct targeting of CaMK2A, which acts downstream of NMDAR to promote dendritic spine and synapse formation and maintain synaptic plasticity which enables long-term potentiation (LTP) and hippocampus-dependent learning. In developing hippocampal neurons, promotes arborization of the dendritic tree and in mature neurons, promotes dendritic remodeling. Also regulates the migration of developing neurons. Participates in the modulation of skeletal muscle function in response to exercise. In slow-twitch muscles, is involved in regulation of sarcoplasmic reticulum (SR) Ca(2+) transport and in fast-twitch muscle participates in the control of Ca(2+) release from the SR through phosphorylation of triadin, a ryanodine receptor-coupling factor, and phospholamban (PLN/PLB), an endogenous inhibitor of SERCA2A/ATP2A2. In response to interferon-gamma (IFN-gamma) stimulation, catalyzes phosphorylation of STAT1, stimulating the JAK-STAT signaling pathway. Phosphorylates reticulophagy regulator RETREG1 at 'Ser-151' under endoplasmic reticulum stress conditions which enhances RETREG1 oligomerization and its membrane scission and reticulophagy activity. In Homo sapiens (Human), this protein is Calcium/calmodulin-dependent protein kinase type II subunit beta (CAMK2B).